The following is a 362-amino-acid chain: tRNA-specific 2-thiouridylase MnmA (362 aa).

Residues 6–13 (AMSGGVDS) and leucine 32 each bind ATP. The active-site Nucleophile is the cysteine 101. Cysteines 101 and 197 form a disulfide. ATP is bound at residue glycine 125. Residues 147 to 149 (KDQ) are interaction with tRNA. The Cysteine persulfide intermediate role is filled by cysteine 197.

It belongs to the MnmA/TRMU family.

It localises to the cytoplasm. The enzyme catalyses S-sulfanyl-L-cysteinyl-[protein] + uridine(34) in tRNA + AH2 + ATP = 2-thiouridine(34) in tRNA + L-cysteinyl-[protein] + A + AMP + diphosphate + H(+). In terms of biological role, catalyzes the 2-thiolation of uridine at the wobble position (U34) of tRNA, leading to the formation of s(2)U34. The protein is tRNA-specific 2-thiouridylase MnmA of Saccharopolyspora erythraea (strain ATCC 11635 / DSM 40517 / JCM 4748 / NBRC 13426 / NCIMB 8594 / NRRL 2338).